The following is a 245-amino-acid chain: Pyridoxine 5'-phosphate synthase (245 aa).

Asparagine 7 is a 3-amino-2-oxopropyl phosphate binding site. 9 to 10 (DH) contributes to the 1-deoxy-D-xylulose 5-phosphate binding site. A 3-amino-2-oxopropyl phosphate-binding site is contributed by arginine 18. Histidine 43 functions as the Proton acceptor in the catalytic mechanism. 2 residues coordinate 1-deoxy-D-xylulose 5-phosphate: arginine 45 and histidine 50. Residue glutamate 70 is the Proton acceptor of the active site. Threonine 100 contacts 1-deoxy-D-xylulose 5-phosphate. Histidine 190 functions as the Proton donor in the catalytic mechanism. 3-amino-2-oxopropyl phosphate-binding positions include glycine 191 and 212–213 (GH).

The protein belongs to the PNP synthase family. In terms of assembly, homooctamer; tetramer of dimers.

It is found in the cytoplasm. It catalyses the reaction 3-amino-2-oxopropyl phosphate + 1-deoxy-D-xylulose 5-phosphate = pyridoxine 5'-phosphate + phosphate + 2 H2O + H(+). It participates in cofactor biosynthesis; pyridoxine 5'-phosphate biosynthesis; pyridoxine 5'-phosphate from D-erythrose 4-phosphate: step 5/5. Its function is as follows. Catalyzes the complicated ring closure reaction between the two acyclic compounds 1-deoxy-D-xylulose-5-phosphate (DXP) and 3-amino-2-oxopropyl phosphate (1-amino-acetone-3-phosphate or AAP) to form pyridoxine 5'-phosphate (PNP) and inorganic phosphate. The protein is Pyridoxine 5'-phosphate synthase of Prochlorococcus marinus (strain MIT 9303).